Here is a 557-residue protein sequence, read N- to C-terminus: MSNPRHNEREVRSPRGDELNAKSWLTEAPLRMLMNNLDPDVAERPHELVVYGGIGRAARTWDDFDRIVATLKTLNDDETLLVQSGKPVGVFRTHKDAPRVLIANSNLVPHWANWDHFNELDKKGLAMYGQMTAGSWIYIGAQGIVQGTYETFVEAGRQHYGGNLKGRWILTGGLGGMGGAQPLAAVMAGACCLAVECDETRADFRLRTRYVDEKTHSLDEALAKIDAWTKAGEAKSIALIGNAAEIFPELVKRGVKPDIVTDQTSAHDPVHGYLPLGWTVAEWRAKQENDPKAVEKAARASMKVQVQAMLDFWNAGIPTVDYGNNIRQMALEEGLENAFAFPGFVPAYIRPLFCRGIGPFRWAALSGDPEDIAKTDAKVKELLPDNKHLHNWLDMAKERIAFQGLPARICWVGLGDRHRLGLAFNEMVRNGELKAPIVIGRDHLDSGSVASPNRETEAMKDGSDAVSDWPLLNALLNTASGATWVSLHHGGGVGMGFSQHAGMVICCDGTEDADRRLERVLWNDPATGVMRHADAGYDIALDWARKQGLRLPAILGN.

The tract at residues 1–20 is disordered; it reads MSNPRHNEREVRSPRGDELN. Residues 52 to 53, Q130, 176 to 178, E196, R201, 242 to 243, 263 to 267, 273 to 274, and Y322 contribute to the NAD(+) site; these read GG, GMG, NA, QTSAH, and YL. Residue C410 is part of the active site. Residue G492 participates in NAD(+) binding.

Belongs to the urocanase family. NAD(+) serves as cofactor.

It is found in the cytoplasm. It carries out the reaction 4-imidazolone-5-propanoate = trans-urocanate + H2O. It participates in amino-acid degradation; L-histidine degradation into L-glutamate; N-formimidoyl-L-glutamate from L-histidine: step 2/3. Its function is as follows. Catalyzes the conversion of urocanate to 4-imidazolone-5-propionate. This is Urocanate hydratase from Brucella ovis (strain ATCC 25840 / 63/290 / NCTC 10512).